Here is a 368-residue protein sequence, read N- to C-terminus: mRNA export factor (368 aa).

The disordered stretch occupies residues 15 to 34 (TSMFGSTTTDNHNPMKDIEV). WD repeat units lie at residues 37–79 (SPDD…QTIP), 84–114 (MHTG…KMWD), 125–157 (QHDA…KFWD), 168–206 (QLPE…EFRR), 215–255 (HRCV…KDNF), 271–301 (QDIY…SFWD), and 310–346 (TSEQ…EFYN). Thr-229 carries the phosphothreonine modification.

It belongs to the WD repeat rae1 family. Interacts with NUMA1 (via N-terminal end of the coiled-coil domain); this interaction promotes spindle formation in mitosis. Interacts with NUP98. Interacts with MYCBP2. Interacts with USP11.

The protein localises to the cytoplasm. It is found in the nucleus. It localises to the cytoskeleton. Its subcellular location is the spindle pole. Its function is as follows. Plays a role in mitotic bipolar spindle formation. Binds mRNA. May function in nucleocytoplasmic transport and in directly or indirectly attaching cytoplasmic mRNPs to the cytoskeleton. The protein is mRNA export factor (Rae1) of Mus musculus (Mouse).